The sequence spans 583 residues: Laccase-14 (583 aa).

The signal sequence occupies residues 1-30 (MAPSLGSGSTRILLIVSLLLCLRQQAVVDA). 2 Plastocyanin-like domains span residues 38–158 (HVGN…PRPG) and 168–320 (AEHT…YDDD). Asparagine 41 and asparagine 84 each carry an N-linked (GlcNAc...) asparagine glycan. The Cu cation site is built by histidine 88 and histidine 90. Residue asparagine 126 is glycosylated (N-linked (GlcNAc...) asparagine). Residues histidine 137 and histidine 139 each coordinate Cu cation. Residues asparagine 179, asparagine 251, asparagine 304, asparagine 338, asparagine 388, asparagine 400, asparagine 446, and asparagine 464 are each glycosylated (N-linked (GlcNAc...) asparagine). The 142-residue stretch at 426 to 567 (DFPDRPPVMF…AMAFDVQDGP (142 aa)) folds into the Plastocyanin-like 3 domain. The Cu cation site is built by histidine 482, histidine 485, histidine 487, histidine 546, cysteine 547, histidine 548, and histidine 552.

Belongs to the multicopper oxidase family. Cu cation serves as cofactor.

It is found in the secreted. The protein localises to the extracellular space. Its subcellular location is the apoplast. It catalyses the reaction 4 hydroquinone + O2 = 4 benzosemiquinone + 2 H2O. Functionally, lignin degradation and detoxification of lignin-derived products. This is Laccase-14 (LAC14) from Oryza sativa subsp. japonica (Rice).